We begin with the raw amino-acid sequence, 314 residues long: MNGVSRHLRASSLLSLIRSYGGINSVCRFSSQSDGFSGGRFREQVPVSGESANNSGLSNTGRIGSSPEPNPSTLRTFGDMKAGLLNRGVNGFSAPNAPPTFKSSLRSRLPNSLPDQFGQTNPGLPNTGGSGFSAPSLSSYENFTQSSSLLKENSRSGGKSSDLDFVREVIEDEGRRTAGIFSHFQRPNLETNADIIHIKMLRNNTFVTVTDSKGNVKCKATSGSLPDLKGGRKMTNYTADATAENIGRRAKAMGLKSVVVKVNGFTHFGKKKKAIIAFRDGFTNSRSDQNPIVYIEDTTRKAHNGCRLPRKRRV.

The N-terminal 37 residues, 1–37 (MNGVSRHLRASSLLSLIRSYGGINSVCRFSSQSDGFS), are a transit peptide targeting the mitochondrion. Residues 34-138 (DGFSGGRFRE…GSGFSAPSLS (105 aa)) form a disordered region. Polar residues predominate over residues 50-63 (ESANNSGLSNTGRI). Residues 103–114 (SSLRSRLPNSLP) are compositionally biased toward low complexity.

The protein belongs to the universal ribosomal protein uS11 family. In terms of assembly, component of the mitochondrial ribosome small subunit (28S) which comprises a 12S rRNA and about 30 distinct proteins.

It localises to the mitochondrion. Functionally, required for karyogamy during female gametophyte development, when the two polar nuclei fuse to form the diploid central cell nucleus. The chain is Small ribosomal subunit protein uS11m from Arabidopsis thaliana (Mouse-ear cress).